The primary structure comprises 160 residues: Ribonuclease H (160 aa).

An RNase H type-1 domain is found at 5–146; the sequence is PGGLVEIWTD…VDQLATAARE (142 aa). Positions 14, 52, 74, and 138 each coordinate Mg(2+).

The protein belongs to the RNase H family. As to quaternary structure, monomer. Mg(2+) is required as a cofactor.

It is found in the cytoplasm. The catalysed reaction is Endonucleolytic cleavage to 5'-phosphomonoester.. Its function is as follows. Endonuclease that specifically degrades the RNA of RNA-DNA hybrids. The sequence is that of Ribonuclease H from Acidiphilium cryptum (strain JF-5).